Consider the following 114-residue polypeptide: Secretoglobin family 2B member 2 (114 aa).

The first 23 residues, 1 to 23 (MKGTLLLLALLVTGELGFQRTEA), serve as a signal peptide directing secretion.

This sequence belongs to the secretoglobin family. In terms of tissue distribution, expressed in lacrimal gland.

Its subcellular location is the secreted. The sequence is that of Secretoglobin family 2B member 2 (Scgb2b2) from Mus musculus (Mouse).